We begin with the raw amino-acid sequence, 293 residues long: Lysosomal amino acid transporter 1 homolog (293 aa).

The Lumenal portion of the chain corresponds to 1-37 (MVWRTLGASNFSTCPNGSVQWIWDVFGECAQDGWDEA). Asn-10 and Asn-16 each carry an N-linked (GlcNAc...) asparagine glycan. In terms of domain architecture, PQ-loop 1 spans 34–100 (WDEASVGLGL…LADQLPLQTY (67 aa)). The helical transmembrane segment at 38–58 (SVGLGLVSILCFAASTFPQYI) threads the bilayer. Residues 59–71 (KACKTGNMDQALS) lie on the Cytoplasmic side of the membrane. The chain crosses the membrane as a helical span at residues 72-92 (LWFLLGWIGGDSCNLIGSFLA). Over 93–96 (DQLP) the chain is Lumenal. A helical membrane pass occupies residues 97-117 (LQTYTAVYYVLADLMMLTLYF). Over 118–127 (HYKFKKRPSP) the chain is Cytoplasmic. Residues 128–148 (LSAPINSVLLFILGTVCITPL) form a helical membrane-spanning segment. Residues 149 to 182 (LSSTDPVAVPREGFRGRTLLSVEPGNKPFTKKEV) are Lumenal-facing. The helical transmembrane segment at 183-203 (IGFVIGSASSLLYLLSRLPQI) threads the bilayer. A PQ-loop 2 domain is found at 191–243 (SSLLYLLSRLPQIRTNFIRQSTQGISYSLFALVMLGNTLYGLSVLLKNPEVGQ). Over 204–214 (RTNFIRQSTQG) the chain is Cytoplasmic. A helical membrane pass occupies residues 215-235 (ISYSLFALVMLGNTLYGLSVL). Residues 236–254 (LKNPEVGQSEGSYLLHHLP) lie on the Lumenal side of the membrane. Residues 255–275 (WLVGSLGVLLLDTIISIQFLV) form a helical membrane-spanning segment. Residues 276–293 (YRSHETAAASEREPLLPS) are Cytoplasmic-facing. The Di-leucine motif motif lies at 290–291 (LL).

It belongs to the laat-1 family. Ubiquitously expressed.

Its subcellular location is the lysosome membrane. In terms of biological role, amino acid transporter that specifically mediates the pH-dependent export of the cationic amino acids arginine, histidine and lysine from lysosomes. The protein is Lysosomal amino acid transporter 1 homolog of Mus musculus (Mouse).